A 709-amino-acid polypeptide reads, in one-letter code: Protein white (709 aa).

Residues 1 to 35 are disordered; the sequence is MTINTDDQYADGESKTTISSNRRYSTSSFQDQSME. The segment covering 15-32 has biased composition (polar residues); that stretch reads KTTISSNRRYSTSSFQDQ. An ABC transporter domain is found at 103 to 348; it reads FTRQRLVKDF…SQLGIPCPPN (246 aa). ATP-binding positions include 136-143 and 292-299; these read GSSGAGKT and GMAMKGKT. A helical membrane pass occupies residues 457–475; that stretch reads LLQTAMVASLIGSIYFGQV. N485 is a glycosylation site (N-linked (GlcNAc...) asparagine). The next 4 helical transmembrane spans lie at 487 to 507, 537 to 555, 564 to 585, and 598 to 616; these read SLFL…INVF, LPLF…YPMI, YLTT…GYLI, and VGPP…FLNS. N-linked (GlcNAc...) asparagine glycosylation occurs at N658. The helical transmembrane segment at 681-700 threads the bilayer; it reads LDIGCLFALIVLFRLGALFC.

This sequence belongs to the ABC transporter superfamily. ABCG family. Eye pigment precursor importer (TC 3.A.1.204) subfamily.

The protein resides in the membrane. May be part of a membrane-spanning permease system necessary for the transport of pigment precursors into pigment cells responsible for eye color. This Anopheles albimanus (New world malaria mosquito) protein is Protein white (W).